The sequence spans 358 residues: NADH-quinone oxidoreductase subunit H (358 aa).

8 consecutive transmembrane segments (helical) span residues 30-50, 96-116, 129-149, 165-185, 201-221, 264-284, 297-317, and 336-356; these read IVIGVCIMLAYAVIAIIMIFM, FLYNLAPYIVILASIMAFSCL, VGIFFLLAASSIGVVGILLAG, GAQMISYELSVGLSILTIVIL, GWFLFKGHIPALIAFIIYLIA, LFIIAAVATTIFLGGWMPLHI, IPGFIWFFGKSFFVVWLLMWI, and YLVPIGLCNLLLMVIIVVFKL.

Belongs to the complex I subunit 1 family. In terms of assembly, NDH-1 is composed of 14 different subunits. Subunits NuoA, H, J, K, L, M, N constitute the membrane sector of the complex.

It is found in the cell inner membrane. The enzyme catalyses a quinone + NADH + 5 H(+)(in) = a quinol + NAD(+) + 4 H(+)(out). Functionally, NDH-1 shuttles electrons from NADH, via FMN and iron-sulfur (Fe-S) centers, to quinones in the respiratory chain. The immediate electron acceptor for the enzyme in this species is believed to be ubiquinone. Couples the redox reaction to proton translocation (for every two electrons transferred, four hydrogen ions are translocated across the cytoplasmic membrane), and thus conserves the redox energy in a proton gradient. This subunit may bind ubiquinone. This chain is NADH-quinone oxidoreductase subunit H, found in Phocaeicola vulgatus (strain ATCC 8482 / DSM 1447 / JCM 5826 / CCUG 4940 / NBRC 14291 / NCTC 11154) (Bacteroides vulgatus).